The following is a 610-amino-acid chain: Myosin light chain kinase 2, skeletal/cardiac muscle (610 aa).

Disordered stretches follow at residues 1 to 168 (MATE…HSPS) and 196 to 240 (VSET…DTSQ). Position 2 is an N-acetylalanine (Ala2). Composition is skewed to basic and acidic residues over residues 32–63 (SEKE…KKNP) and 70–82 (KTPE…KKGD). The span at 94–109 (SGEGDGGGGPAEGGTG) shows a compositional bias: gly residues. Residues 141–157 (GEAKAGKKAAECREAGR) show a composition bias toward basic and acidic residues. Ser160, Ser166, and Ser168 each carry phosphoserine. The Protein kinase domain maps to 299–554 (MNSKEALGGG…AEQCLAHPWL (256 aa)). Residues 305–313 (LGGGKFGAV) and Lys328 each bind ATP. Asp420 acts as the Proton acceptor in catalysis. At Thr459 the chain carries Phosphothreonine. The interval 588–600 (IAVSAANRFKKIS) is calmodulin-binding.

Belongs to the protein kinase superfamily. CAMK Ser/Thr protein kinase family. May interact with centrin.

Its subcellular location is the cytoplasm. It carries out the reaction L-seryl-[myosin light chain] + ATP = O-phospho-L-seryl-[myosin light chain] + ADP + H(+). The catalysed reaction is L-threonyl-[myosin light chain] + ATP = O-phospho-L-threonyl-[myosin light chain] + ADP + H(+). Implicated in the level of global muscle contraction and cardiac function. Phosphorylates a specific serine in the N-terminus of a myosin light chain. The protein is Myosin light chain kinase 2, skeletal/cardiac muscle (Mylk2) of Rattus norvegicus (Rat).